The sequence spans 1037 residues: Multidrug resistance protein MdtF (1037 aa).

The Cytoplasmic segment spans residues 1-9 (MANYFIDRP). The helical transmembrane segment at 10-30 (VFAWVLAIIMMLAGGLAIMNL) threads the bilayer. Over 31 to 338 (PVAQYPQIAP…TTPFIEISIQ (308 aa)) the chain is Periplasmic. The chain crosses the membrane as a helical span at residues 339–359 (EVFKTLVEAIILVFLVMYLFL). Residues 360–369 (QNFRATIIPT) are Cytoplasmic-facing. Residues 370-390 (IAVPVVILGTFAILSAVGFTI) traverse the membrane as a helical segment. The Periplasmic portion of the chain corresponds to 391–392 (NT). A helical membrane pass occupies residues 393 to 413 (LTMFGMVLAIGLLVDDAIVVV). Over 414 to 441 (ENVERVIAEDKLPPKEATHKSMGQIQRA) the chain is Cytoplasmic. The helical transmembrane segment at 442-462 (LVGIAVVLSAVFMPMAFMSGA) threads the bilayer. Residues 463–471 (TGEIYRQFS) are Periplasmic-facing. The helical transmembrane segment at 472–492 (ITLISSMLLSVFVAMSLTPAL) threads the bilayer. Residues 493 to 534 (CATILKAAPEGGHKPNALFARFNTLFEKSTQHYTDSTRSLLR) are Cytoplasmic-facing. Residues 535-555 (CTGRYMVIYLLICAGMAVLFL) traverse the membrane as a helical segment. At 556-870 (RTPTSFLPEE…SYQEALSSNQ (315 aa)) the chain is on the periplasmic side. Residues 871-891 (APALYAISLVVVFLALAALYE) traverse the membrane as a helical segment. Position 892 (Ser-892) is a topological domain, cytoplasmic. A helical membrane pass occupies residues 893–913 (WSIPFSVMLVVPLGVVGALLA). At 914-927 (TDLRGLSNDVYFQV) the chain is on the periplasmic side. Residues 928–948 (GLLTTIGLSAKNAILIVEFAV) traverse the membrane as a helical segment. Over 949 to 972 (EMMQKEGKTPIEAIIEAARMRLRP) the chain is Cytoplasmic. Residues 973 to 993 (ILMTSLAFILGVLPLVISHGA) traverse the membrane as a helical segment. Topologically, residues 994–1006 (GSGAQNAVGTGVM) are periplasmic. Residues 1007-1027 (GGMFAATVLAIYFVPVFFVVV) form a helical membrane-spanning segment. Over 1028–1037 (EHLFARFKKA) the chain is Cytoplasmic.

This sequence belongs to the resistance-nodulation-cell division (RND) (TC 2.A.6) family. Homotrimer. Part of the tripartite efflux system MdtEF-TolC, which is composed of an inner membrane transporter, MdtF, a membrane fusion protein, MdtE, and an outer membrane component, TolC. The complex forms a large protein conduit and can translocate molecules across both the inner and outer membranes.

It localises to the cell inner membrane. In terms of biological role, part of the tripartite efflux system MdtEF-TolC, which confers resistance to various compounds. This Escherichia coli O157:H7 protein is Multidrug resistance protein MdtF (mdtF).